The sequence spans 863 residues: Desmocollin-2 (863 aa).

Residues 1-89 constitute a propeptide that is removed on maturation; it reads KFIGRVNLKE…QEKVLRRAKR (89 aa). 5 Cadherin domains span residues 90-197, 198-309, 310-423, 424-528, and 529-644; these read RWAP…APIF, TETS…LPTF, TRSS…GPEC, DPRV…VIPQ, and RTVV…ILGK. The Extracellular segment spans residues 90–644; the sequence is RWAPIPCSVP…TGNREVILGK (555 aa). Residue Asn-120 is glycosylated (N-linked (GlcNAc...) asparagine). N-linked (GlcNAc...) asparagine glycans are attached at residues Asn-346, Asn-495, and Asn-579. A helical transmembrane segment spans residues 645 to 665; it reads WAILAILLGIALLFCILFTLV. The Cytoplasmic segment spans residues 666–863; it reads CGATTGADKK…RTLAETCMKR (198 aa). Phosphoserine occurs at positions 826, 830, and 835.

Interacts with DSP, PKP2 and JUP. Interacts with DSG3; the interaction may limit the interaction of DSC3 with p38MAPK family members and therefore repress p38MAPK signaling activation. As to expression, expressed in esophagus and rumen. Weakly expressed in epithelia and cardiac muscle.

The protein localises to the cell membrane. It is found in the cell junction. It localises to the desmosome. Its function is as follows. A component of desmosome cell-cell junctions which are required for positive regulation of cellular adhesion. Promotes timely incorporation of DSG2 into desmosome intercellular junctions and promotes interaction of desmosome cell junctions with intermediate filament cytokeratin, via modulation of DSP phosphorylation. Plays an important role in desmosome-mediated maintenance of intestinal epithelial cell intercellular adhesion strength and barrier function. Positively regulates wound healing of intestinal mucosa via promotion of epithelial cell migration, and also plays a role in mechanotransduction of force between intestinal epithelial cells and extracellular matrix. May contribute to epidermal cell positioning (stratification) by mediating differential adhesiveness between cells that express different isoforms. This chain is Desmocollin-2 (DSC2), found in Bos taurus (Bovine).